A 569-amino-acid chain; its full sequence is Urease subunit alpha (569 aa).

In terms of domain architecture, Urease spans 131–569 (GGIDAHIHFI…VPMAQRYFLF (439 aa)). Ni(2+) contacts are provided by histidine 136, histidine 138, and lysine 219. An N6-carboxylysine modification is found at lysine 219. Histidine 221 lines the substrate pocket. Histidine 248 and histidine 274 together coordinate Ni(2+). The Proton donor role is filled by histidine 322. Ni(2+) is bound at residue aspartate 362.

It belongs to the metallo-dependent hydrolases superfamily. Urease alpha subunit family. Heterotrimer of UreA (gamma), UreB (beta) and UreC (alpha) subunits. Three heterotrimers associate to form the active enzyme. Requires Ni cation as cofactor. Post-translationally, carboxylation allows a single lysine to coordinate two nickel ions.

The protein resides in the cytoplasm. It catalyses the reaction urea + 2 H2O + H(+) = hydrogencarbonate + 2 NH4(+). Its pathway is nitrogen metabolism; urea degradation; CO(2) and NH(3) from urea (urease route): step 1/1. The sequence is that of Urease subunit alpha from Bacillus sp. (strain TB-90).